The sequence spans 126 residues: Large ribosomal subunit protein uL22 (126 aa).

This sequence belongs to the universal ribosomal protein uL22 family. Part of the 50S ribosomal subunit.

In terms of biological role, this protein binds specifically to 23S rRNA; its binding is stimulated by other ribosomal proteins, e.g. L4, L17, and L20. It is important during the early stages of 50S assembly. It makes multiple contacts with different domains of the 23S rRNA in the assembled 50S subunit and ribosome. Its function is as follows. The globular domain of the protein is located near the polypeptide exit tunnel on the outside of the subunit, while an extended beta-hairpin is found that lines the wall of the exit tunnel in the center of the 70S ribosome. The chain is Large ribosomal subunit protein uL22 from Zymomonas mobilis subsp. mobilis (strain ATCC 31821 / ZM4 / CP4).